A 141-amino-acid chain; its full sequence is Large ribosomal subunit protein uL11 (141 aa).

It belongs to the universal ribosomal protein uL11 family. As to quaternary structure, part of the ribosomal stalk of the 50S ribosomal subunit. Interacts with L10 and the large rRNA to form the base of the stalk. L10 forms an elongated spine to which L12 dimers bind in a sequential fashion forming a multimeric L10(L12)X complex. Post-translationally, one or more lysine residues are methylated.

Forms part of the ribosomal stalk which helps the ribosome interact with GTP-bound translation factors. This Clostridium novyi (strain NT) protein is Large ribosomal subunit protein uL11.